The chain runs to 284 residues: Nucleotide-binding protein PP_0949 (284 aa).

8 to 15 (GRSGSGKS) serves as a coordination point for ATP. Residue 60–63 (DARN) coordinates GTP.

This sequence belongs to the RapZ-like family.

Its function is as follows. Displays ATPase and GTPase activities. The chain is Nucleotide-binding protein PP_0949 from Pseudomonas putida (strain ATCC 47054 / DSM 6125 / CFBP 8728 / NCIMB 11950 / KT2440).